Here is a 127-residue protein sequence, read N- to C-terminus: uncharacterized protein (127 aa).

Positions M1–G23 are cleaved as a signal peptide. The disordered stretch occupies residues C43–R127. Over residues P59–L70 the composition is skewed to low complexity.

The protein resides in the secreted. This is an uncharacterized protein from Homo sapiens (Human).